Consider the following 481-residue polypeptide: tRNA-2-methylthio-N(6)-dimethylallyladenosine synthase (481 aa).

Residues 24 to 140 enclose the MTTase N-terminal domain; sequence RKLFIESYGC…LPNLINEVEE (117 aa). Residues cysteine 33, cysteine 69, cysteine 103, cysteine 178, cysteine 182, and cysteine 185 each contribute to the [4Fe-4S] cluster site. Positions 164–410 constitute a Radical SAM core domain; the sequence is QSNGVSAFVS…VDLQQKHSKQ (247 aa). The 64-residue stretch at 413–476 folds into the TRAM domain; sequence NSVIGTTVEV…SATLIGEPIG (64 aa).

It belongs to the methylthiotransferase family. MiaB subfamily. Monomer. Requires [4Fe-4S] cluster as cofactor.

The protein resides in the cytoplasm. The catalysed reaction is N(6)-dimethylallyladenosine(37) in tRNA + (sulfur carrier)-SH + AH2 + 2 S-adenosyl-L-methionine = 2-methylsulfanyl-N(6)-dimethylallyladenosine(37) in tRNA + (sulfur carrier)-H + 5'-deoxyadenosine + L-methionine + A + S-adenosyl-L-homocysteine + 2 H(+). Functionally, catalyzes the methylthiolation of N6-(dimethylallyl)adenosine (i(6)A), leading to the formation of 2-methylthio-N6-(dimethylallyl)adenosine (ms(2)i(6)A) at position 37 in tRNAs that read codons beginning with uridine. This Christiangramia forsetii (strain DSM 17595 / CGMCC 1.15422 / KT0803) (Gramella forsetii) protein is tRNA-2-methylthio-N(6)-dimethylallyladenosine synthase.